Consider the following 121-residue polypeptide: RxLR effector protein PexRD2 (121 aa).

A signal peptide spans 1–18 (MRLSYVFVVFAASLLVTA). A RxLR-dEER motif is present at residues 38 to 56 (RLLRKHYTAAENDGDSEAR). A WY domain region spans residues 57-121 (ALNPEKMKTM…LNYVAEHTAV (65 aa)).

The protein belongs to the RxLR effector family.

The protein localises to the secreted. The protein resides in the host cytoplasm. Its subcellular location is the host nucleus. Functionally, secreted effector involved in P.mirabilis colonization of host plants. May perturb the signaling of cell death associated with plant immunity, via interaction with a host MAP kinase. This Phytophthora mirabilis protein is RxLR effector protein PexRD2.